We begin with the raw amino-acid sequence, 245 residues long: 1-(5-phosphoribosyl)-5-[(5-phosphoribosylamino)methylideneamino] imidazole-4-carboxamide isomerase (245 aa).

Aspartate 7 (proton acceptor) is an active-site residue. Aspartate 129 acts as the Proton donor in catalysis.

This sequence belongs to the HisA/HisF family.

The protein resides in the cytoplasm. The catalysed reaction is 1-(5-phospho-beta-D-ribosyl)-5-[(5-phospho-beta-D-ribosylamino)methylideneamino]imidazole-4-carboxamide = 5-[(5-phospho-1-deoxy-D-ribulos-1-ylimino)methylamino]-1-(5-phospho-beta-D-ribosyl)imidazole-4-carboxamide. Its pathway is amino-acid biosynthesis; L-histidine biosynthesis; L-histidine from 5-phospho-alpha-D-ribose 1-diphosphate: step 4/9. The polypeptide is 1-(5-phosphoribosyl)-5-[(5-phosphoribosylamino)methylideneamino] imidazole-4-carboxamide isomerase (Shewanella sp. (strain MR-4)).